Consider the following 185-residue polypeptide: Hypoxanthine/guanine phosphoribosyltransferase (185 aa).

Belongs to the purine/pyrimidine phosphoribosyltransferase family. Archaeal HPRT subfamily. Homodimer.

Its subcellular location is the cytoplasm. It carries out the reaction IMP + diphosphate = hypoxanthine + 5-phospho-alpha-D-ribose 1-diphosphate. It catalyses the reaction GMP + diphosphate = guanine + 5-phospho-alpha-D-ribose 1-diphosphate. It functions in the pathway purine metabolism; IMP biosynthesis via salvage pathway; IMP from hypoxanthine: step 1/1. In terms of biological role, catalyzes a salvage reaction resulting in the formation of IMP that is energically less costly than de novo synthesis. The polypeptide is Hypoxanthine/guanine phosphoribosyltransferase (Methanococcus maripaludis (strain C6 / ATCC BAA-1332)).